Consider the following 677-residue polypeptide: UvrABC system protein B (677 aa).

One can recognise a Helicase ATP-binding domain in the interval 31-417; that stretch reads DRIESGETDI…SDGVVEQIIR (387 aa). 44–51 lines the ATP pocket; sequence GATGTGKS. Residues 97–120 carry the Beta-hairpin motif; that stretch reads YYDYYQPEAYVPKTDTFIEKDASV. The region spanning 434-596 is the Helicase C-terminal domain; the sequence is QIDDLLEEIR…VTPVPIKKTV (163 aa). One can recognise a UVR domain in the interval 629–664; it reads KSHIKSLEAKMYMAAESLMFEEAAELRDEIQSLKEK.

The protein belongs to the UvrB family. As to quaternary structure, forms a heterotetramer with UvrA during the search for lesions. Interacts with UvrC in an incision complex.

The protein localises to the cytoplasm. The UvrABC repair system catalyzes the recognition and processing of DNA lesions. A damage recognition complex composed of 2 UvrA and 2 UvrB subunits scans DNA for abnormalities. Upon binding of the UvrA(2)B(2) complex to a putative damaged site, the DNA wraps around one UvrB monomer. DNA wrap is dependent on ATP binding by UvrB and probably causes local melting of the DNA helix, facilitating insertion of UvrB beta-hairpin between the DNA strands. Then UvrB probes one DNA strand for the presence of a lesion. If a lesion is found the UvrA subunits dissociate and the UvrB-DNA preincision complex is formed. This complex is subsequently bound by UvrC and the second UvrB is released. If no lesion is found, the DNA wraps around the other UvrB subunit that will check the other stand for damage. This chain is UvrABC system protein B, found in Tropheryma whipplei (strain TW08/27) (Whipple's bacillus).